We begin with the raw amino-acid sequence, 446 residues long: Deoxyguanosinetriphosphate triphosphohydrolase-like protein (446 aa).

Residues 1–28 (MSSSVWQERRHGEDKQRRNDHRSPFQRD) form a disordered region. The segment covering 7 to 28 (QERRHGEDKQRRNDHRSPFQRD) has biased composition (basic and acidic residues). The HD domain occupies 59-252 (RLTHSLEVSQ…MELADDIAYA (194 aa)).

The protein belongs to the dGTPase family. Type 2 subfamily.

The protein is Deoxyguanosinetriphosphate triphosphohydrolase-like protein of Shewanella sp. (strain MR-7).